The following is a 135-amino-acid chain: UPF0329 protein ECU07_1860/ECU10_0040/ECU11_2100 (135 aa).

Belongs to the UPF0329 family.

In Encephalitozoon cuniculi (strain GB-M1) (Microsporidian parasite), this protein is UPF0329 protein ECU07_1860/ECU10_0040/ECU11_2100.